Consider the following 356-residue polypeptide: Phosphoserine aminotransferase (356 aa).

Residue R41 participates in L-glutamate binding. Residues 76 to 77, W102, T150, D169, and Q192 contribute to the pyridoxal 5'-phosphate site; that span reads AS. At K193 the chain carries N6-(pyridoxal phosphate)lysine. 234–235 contacts pyridoxal 5'-phosphate; that stretch reads NT.

The protein belongs to the class-V pyridoxal-phosphate-dependent aminotransferase family. SerC subfamily. In terms of assembly, homodimer. The cofactor is pyridoxal 5'-phosphate.

It localises to the cytoplasm. The enzyme catalyses O-phospho-L-serine + 2-oxoglutarate = 3-phosphooxypyruvate + L-glutamate. It carries out the reaction 4-(phosphooxy)-L-threonine + 2-oxoglutarate = (R)-3-hydroxy-2-oxo-4-phosphooxybutanoate + L-glutamate. It functions in the pathway amino-acid biosynthesis; L-serine biosynthesis; L-serine from 3-phospho-D-glycerate: step 2/3. Its pathway is cofactor biosynthesis; pyridoxine 5'-phosphate biosynthesis; pyridoxine 5'-phosphate from D-erythrose 4-phosphate: step 3/5. Functionally, catalyzes the reversible conversion of 3-phosphohydroxypyruvate to phosphoserine and of 3-hydroxy-2-oxo-4-phosphonooxybutanoate to phosphohydroxythreonine. The protein is Phosphoserine aminotransferase of Flavobacterium psychrophilum (strain ATCC 49511 / DSM 21280 / CIP 103535 / JIP02/86).